The sequence spans 1118 residues: Pleckstrin homology domain-containing family A member 7 (1118 aa).

WW domains follow at residues 8–41 (DTLP…HPRT) and 53–86 (SDLP…HPVT). Over residues 100–113 (EEPHPHMSKPERNQ) the composition is skewed to basic and acidic residues. The interval 100–145 (EEPHPHMSKPERNQRPSSMVSETSTAGTTSTLEAKPGPKIVKSSSK) is disordered. The span at 114 to 131 (RPSSMVSETSTAGTTSTL) shows a compositional bias: polar residues. The PH domain occupies 163–281 (PVVVRGWLHK…WVRAMNQAAQ (119 aa)). 2 stretches are compositionally biased toward basic and acidic residues: residues 334-355 (FNRR…EGRR) and 434-443 (HWTKAQKGDG). Disordered stretches follow at residues 334 to 512 (FNRR…RRAH) and 528 to 629 (QFRH…RRSM). Positions 452 to 481 (LPRQGPSQPLSFPENYQSLPKSTRHLSGSS) are enriched in polar residues. A compositionally biased stretch (basic and acidic residues) spans 494-512 (YAQDRASHLKMSSEERRAH). Serine 533, serine 542, serine 566, serine 601, serine 605, and serine 609 each carry phosphoserine. The interaction with CTNND1 stretch occupies residues 535–693 (TAPIGAGSPE…AESDIDVKLS (159 aa)). Pro residues predominate over residues 564 to 579 (PPSPSDIPPPGPPRPF). Over residues 586 to 602 (TPAERVTVKPPEQRRSV) the composition is skewed to basic and acidic residues. Residues 697 to 798 (EQDRILQDLE…LQEQHRRAFF (102 aa)) adopt a coiled-coil conformation. 2 disordered regions span residues 839 to 873 (KTVP…VRTP) and 886 to 968 (VPYR…EQGQ). Residues serine 857 and serine 864 each carry the phosphoserine modification. The residue at position 867 (threonine 867) is a Phosphothreonine. A phosphoserine mark is found at serine 868, serine 900, and serine 904. Pro residues predominate over residues 930–939 (DQPPAVPPLP). Over residues 955-966 (RQSDERKRDREQ) the composition is skewed to basic and acidic residues. Serine 983 and leucine 990 each carry phosphoserine. The interval 1003–1024 (GSESRYQTLPGRGLSGSTSRLQ) is disordered. The stretch at 1064-1091 (QRGKMSAEEQLERMKRHQKALVRERKRT) forms a coiled coil.

In terms of assembly, interacts with CAMSAP3 and CTNND1. Interacts (via WW domains) with TSPAN33 (via cytoplasmic domain) and with PDZD11; the interaction with TSPAN33 is dependent on PDZD11 being bound to PLEKHA7 and facilitates the docking of ADAM10 to zonula adherens through interaction of TSPAN33 with ADAM10. As to expression, expressed in kidney and lung (at protein level).

The protein localises to the cell junction. The protein resides in the adherens junction. It is found in the cytoplasm. Its subcellular location is the cytoskeleton. It localises to the microtubule organizing center. The protein localises to the centrosome. Required for zonula adherens biogenesis and maintenance. Acts via its interaction with CAMSAP3, which anchors microtubules at their minus-ends to zonula adherens, leading to the recruitment of KIFC3 kinesin to the junctional site. Mediates docking of ADAM10 to zonula adherens through a PDZD11-dependent interaction with the ADAM10-binding protein TSPAN33. This is Pleckstrin homology domain-containing family A member 7 (Plekha7) from Mus musculus (Mouse).